The chain runs to 1325 residues: Zinc finger MYM-type protein 6 (1325 aa).

8 MYM-type zinc fingers span residues 113 to 151 (QLFC…PKDV), 163 to 206 (KDFC…RFEV), 213 to 248 (HGLC…SSGP), 296 to 334 (ELFC…QYHL), 342 to 443 (YSFC…KPEL), 451 to 485 (FLFC…KETV), 492 to 531 (KPFC…LVEN), and 538 to 572 (EEFC…SESI). The residue at position 397 (S397) is a Phosphoserine. A disordered region spans residues 665–733 (ESTQEDAMKF…NDAELDSPPS (69 aa)). Residues 695-706 (PVTQTKATSCKP) show a composition bias toward polar residues.

In terms of tissue distribution, expressed at high levels in heart, skeletal muscle, kidney and liver.

The protein resides in the nucleus. Its function is as follows. Plays a role in the regulation of cell morphology and cytoskeletal organization. The polypeptide is Zinc finger MYM-type protein 6 (ZMYM6) (Homo sapiens (Human)).